The sequence spans 20 residues: Pregnancy-associated glycoprotein 73B (20 aa).

It belongs to the peptidase A1 family. In terms of processing, N-glycosylated. Expressed in chorionic epithelium (trophectoderm).

Its subcellular location is the secreted. The protein resides in the extracellular space. This is Pregnancy-associated glycoprotein 73B from Bubalus bubalis (Domestic water buffalo).